The chain runs to 107 residues: Sulmotoxin 1 (107 aa).

Positions 1 to 19 (MKTLLLALAVVVLVCLGSA) are cleaved as a signal peptide. Positions 20–34 (NELGLGRQRVDRRRR) are excised as a propeptide. Intrachain disulfides connect cysteine 44/cysteine 68, cysteine 47/cysteine 55, cysteine 61/cysteine 83, cysteine 87/cysteine 98, and cysteine 99/cysteine 104.

The protein belongs to the three-finger toxin family. Ancestral subfamily. Boigatoxin sub-subfamily. Monomer. Expressed by the venom gland.

Its subcellular location is the secreted. Functionally, mammal-specific neurotoxin (tested on mice). Not toxic to lizards (tested on geckos). This chain is Sulmotoxin 1, found in Spilotes sulphureus (Amazon puffing snake).